A 91-amino-acid polypeptide reads, in one-letter code: Gas vesicle protein K (91 aa).

This sequence belongs to the gas vesicle GvpK family.

It is found in the gas vesicle. Might be involved in nucleating gas vesicle formation. Gas vesicles are hollow, gas filled proteinaceous nanostructures found in some microorganisms. It is not clear what function gas vesicles perform in soil bacteria. The polypeptide is Gas vesicle protein K (Streptomyces sp. (strain CB03234)).